The sequence spans 180 residues: Large ribosomal subunit protein uL5 (180 aa).

It belongs to the universal ribosomal protein uL5 family. As to quaternary structure, part of the 50S ribosomal subunit; part of the 5S rRNA/L5/L18/L25 subcomplex. Contacts the 5S rRNA and the P site tRNA. Forms a bridge to the 30S subunit in the 70S ribosome.

Functionally, this is one of the proteins that bind and probably mediate the attachment of the 5S RNA into the large ribosomal subunit, where it forms part of the central protuberance. In the 70S ribosome it contacts protein S13 of the 30S subunit (bridge B1b), connecting the 2 subunits; this bridge is implicated in subunit movement. Contacts the P site tRNA; the 5S rRNA and some of its associated proteins might help stabilize positioning of ribosome-bound tRNAs. This Spiroplasma kunkelii protein is Large ribosomal subunit protein uL5.